A 450-amino-acid polypeptide reads, in one-letter code: Oxygen-independent coproporphyrinogen III oxidase (450 aa).

Residues 42-276 form the Radical SAM core domain; that stretch reads LPAGASASLY…CAIANALKEA (235 aa). Y51 is an S-adenosyl-L-methionine binding site. C57 and C61 together coordinate [4Fe-4S] cluster. Y63 contributes to the S-adenosyl-L-methionine binding site. Residue C64 participates in [4Fe-4S] cluster binding. S-adenosyl-L-methionine contacts are provided by residues G108, 109–110, E141, Q168, R180, D205, A239, and I325; that span reads GT.

It belongs to the anaerobic coproporphyrinogen-III oxidase family. As to quaternary structure, monomer. The cofactor is [4Fe-4S] cluster.

It localises to the cytoplasm. The catalysed reaction is coproporphyrinogen III + 2 S-adenosyl-L-methionine = protoporphyrinogen IX + 2 5'-deoxyadenosine + 2 L-methionine + 2 CO2. It participates in porphyrin-containing compound metabolism; protoporphyrin-IX biosynthesis; protoporphyrinogen-IX from coproporphyrinogen-III (AdoMet route): step 1/1. Involved in the heme biosynthesis. Catalyzes the anaerobic oxidative decarboxylation of propionate groups of rings A and B of coproporphyrinogen III to yield the vinyl groups in protoporphyrinogen IX. The chain is Oxygen-independent coproporphyrinogen III oxidase (hemN) from Bradyrhizobium diazoefficiens (strain JCM 10833 / BCRC 13528 / IAM 13628 / NBRC 14792 / USDA 110).